Consider the following 271-residue polypeptide: Oxidation resistance protein 1 (271 aa).

Residues 15 to 41 (WSNSEESDRDPRHLKSSDDLSNYTGSR) are disordered. Over residues 23 to 32 (RDPRHLKSSD) the composition is skewed to basic and acidic residues. Residues 63–271 (RLLHPEMCDE…IMGLEVWRVG (209 aa)) form the TLDc domain.

Belongs to the OXR1 family.

It is found in the mitochondrion. Its function is as follows. May be involved in protection from oxidative damage. This is Oxidation resistance protein 1 (OXR1) from Candida glabrata (strain ATCC 2001 / BCRC 20586 / JCM 3761 / NBRC 0622 / NRRL Y-65 / CBS 138) (Yeast).